The following is a 481-amino-acid chain: Cysteine--tRNA ligase (481 aa).

Cys43 serves as a coordination point for Zn(2+). The short motif at 45–55 (ATVQGLPHIGH) is the 'HIGH' region element. 3 residues coordinate Zn(2+): Cys221, His246, and Glu250. The 'KMSKS' region motif lies at 277–281 (KMSKS). Lys280 contacts ATP.

The protein belongs to the class-I aminoacyl-tRNA synthetase family. Monomer. Requires Zn(2+) as cofactor.

It is found in the cytoplasm. The enzyme catalyses tRNA(Cys) + L-cysteine + ATP = L-cysteinyl-tRNA(Cys) + AMP + diphosphate. The chain is Cysteine--tRNA ligase from Mycobacterium sp. (strain KMS).